We begin with the raw amino-acid sequence, 533 residues long: AAA-ATPase At5g17740 (533 aa).

The chain crosses the membrane as a helical span at residues 11 to 27; it reads ASMFSTYASMMGYVMII. 252 to 259 lines the ATP pocket; sequence GPPGTGKS.

Belongs to the AAA ATPase family. BCS1 subfamily. Mg(2+) serves as cofactor.

It is found in the membrane. The enzyme catalyses ATP + H2O = ADP + phosphate + H(+). In Arabidopsis thaliana (Mouse-ear cress), this protein is AAA-ATPase At5g17740.